A 423-amino-acid chain; its full sequence is Elongation factor 1-alpha (423 aa).

One can recognise a tr-type G domain in the interval 5–221 (KEHINVAFIG…DLLKPPEKLV (217 aa)). The tract at residues 14–21 (GHVDHGKS) is G1. GTP is bound at residue 14–21 (GHVDHGKS). Mg(2+) is bound at residue S21. The tract at residues 70 to 74 (GVTID) is G2. The segment at 91 to 94 (DCPG) is G3. Residues 91 to 95 (DCPGH) and 146 to 149 (NKMD) contribute to the GTP site. Residues 146–149 (NKMD) form a G4 region. The tract at residues 185-187 (SAY) is G5.

It belongs to the TRAFAC class translation factor GTPase superfamily. Classic translation factor GTPase family. EF-Tu/EF-1A subfamily.

Its subcellular location is the cytoplasm. The catalysed reaction is GTP + H2O = GDP + phosphate + H(+). In terms of biological role, GTP hydrolase that promotes the GTP-dependent binding of aminoacyl-tRNA to the A-site of ribosomes during protein biosynthesis. The polypeptide is Elongation factor 1-alpha (Archaeoglobus fulgidus (strain ATCC 49558 / DSM 4304 / JCM 9628 / NBRC 100126 / VC-16)).